The chain runs to 377 residues: Cobalt-precorrin-5B C(1)-methyltransferase (377 aa).

It belongs to the CbiD family.

It carries out the reaction Co-precorrin-5B + S-adenosyl-L-methionine = Co-precorrin-6A + S-adenosyl-L-homocysteine. Its pathway is cofactor biosynthesis; adenosylcobalamin biosynthesis; cob(II)yrinate a,c-diamide from sirohydrochlorin (anaerobic route): step 6/10. Its function is as follows. Catalyzes the methylation of C-1 in cobalt-precorrin-5B to form cobalt-precorrin-6A. The polypeptide is Cobalt-precorrin-5B C(1)-methyltransferase (Alkaliphilus metalliredigens (strain QYMF)).